We begin with the raw amino-acid sequence, 82 residues long: Putative membrane protein insertion efficiency factor (82 aa).

Belongs to the UPF0161 family.

Its subcellular location is the cell inner membrane. In terms of biological role, could be involved in insertion of integral membrane proteins into the membrane. The sequence is that of Putative membrane protein insertion efficiency factor from Rickettsia felis (strain ATCC VR-1525 / URRWXCal2) (Rickettsia azadi).